The following is a 130-amino-acid chain: Small ribosomal subunit protein uS9 (130 aa).

This sequence belongs to the universal ribosomal protein uS9 family.

The sequence is that of Small ribosomal subunit protein uS9 from Desulfosudis oleivorans (strain DSM 6200 / JCM 39069 / Hxd3) (Desulfococcus oleovorans).